The sequence spans 613 residues: Dihydroxy-acid dehydratase (613 aa).

Mg(2+) is bound at residue D81. C122 serves as a coordination point for [2Fe-2S] cluster. D123 and K124 together coordinate Mg(2+). The residue at position 124 (K124) is an N6-carboxylysine. A [2Fe-2S] cluster-binding site is contributed by C193. E489 serves as a coordination point for Mg(2+). S515 (proton acceptor) is an active-site residue.

It belongs to the IlvD/Edd family. Homodimer. [2Fe-2S] cluster serves as cofactor. Mg(2+) is required as a cofactor.

It carries out the reaction (2R)-2,3-dihydroxy-3-methylbutanoate = 3-methyl-2-oxobutanoate + H2O. It catalyses the reaction (2R,3R)-2,3-dihydroxy-3-methylpentanoate = (S)-3-methyl-2-oxopentanoate + H2O. It functions in the pathway amino-acid biosynthesis; L-isoleucine biosynthesis; L-isoleucine from 2-oxobutanoate: step 3/4. It participates in amino-acid biosynthesis; L-valine biosynthesis; L-valine from pyruvate: step 3/4. Its function is as follows. Functions in the biosynthesis of branched-chain amino acids. Catalyzes the dehydration of (2R,3R)-2,3-dihydroxy-3-methylpentanoate (2,3-dihydroxy-3-methylvalerate) into 2-oxo-3-methylpentanoate (2-oxo-3-methylvalerate) and of (2R)-2,3-dihydroxy-3-methylbutanoate (2,3-dihydroxyisovalerate) into 2-oxo-3-methylbutanoate (2-oxoisovalerate), the penultimate precursor to L-isoleucine and L-valine, respectively. In Pseudomonas fluorescens (strain SBW25), this protein is Dihydroxy-acid dehydratase.